The following is a 59-amino-acid chain: Large ribosomal subunit protein uL30 (59 aa).

This sequence belongs to the universal ribosomal protein uL30 family. In terms of assembly, part of the 50S ribosomal subunit.

The sequence is that of Large ribosomal subunit protein uL30 from Pelotomaculum thermopropionicum (strain DSM 13744 / JCM 10971 / SI).